The sequence spans 349 residues: 4-hydroxythreonine-4-phosphate dehydrogenase (349 aa).

2 residues coordinate substrate: histidine 141 and threonine 142. A divalent metal cation is bound by residues histidine 176, histidine 221, and histidine 276. Lysine 284, asparagine 293, and arginine 302 together coordinate substrate.

It belongs to the PdxA family. As to quaternary structure, homodimer. Zn(2+) is required as a cofactor. Requires Mg(2+) as cofactor. It depends on Co(2+) as a cofactor.

Its subcellular location is the cytoplasm. It catalyses the reaction 4-(phosphooxy)-L-threonine + NAD(+) = 3-amino-2-oxopropyl phosphate + CO2 + NADH. It participates in cofactor biosynthesis; pyridoxine 5'-phosphate biosynthesis; pyridoxine 5'-phosphate from D-erythrose 4-phosphate: step 4/5. In terms of biological role, catalyzes the NAD(P)-dependent oxidation of 4-(phosphooxy)-L-threonine (HTP) into 2-amino-3-oxo-4-(phosphooxy)butyric acid which spontaneously decarboxylates to form 3-amino-2-oxopropyl phosphate (AHAP). This Methylorubrum extorquens (strain CM4 / NCIMB 13688) (Methylobacterium extorquens) protein is 4-hydroxythreonine-4-phosphate dehydrogenase.